Reading from the N-terminus, the 377-residue chain is N5-carboxyaminoimidazole ribonucleotide synthase (377 aa).

Residues R93, K133, 138–144 (GYDGKGQ), 175–178 (EEFV), E183, H206, and 257–258 (NE) each bind ATP. The region spanning 97-287 (KALLDNAGVR…QFENHLRAVC (191 aa)) is the ATP-grasp domain.

The protein belongs to the PurK/PurT family. As to quaternary structure, homodimer.

It catalyses the reaction 5-amino-1-(5-phospho-beta-D-ribosyl)imidazole + hydrogencarbonate + ATP = 5-carboxyamino-1-(5-phospho-D-ribosyl)imidazole + ADP + phosphate + 2 H(+). Its pathway is purine metabolism; IMP biosynthesis via de novo pathway; 5-amino-1-(5-phospho-D-ribosyl)imidazole-4-carboxylate from 5-amino-1-(5-phospho-D-ribosyl)imidazole (N5-CAIR route): step 1/2. Catalyzes the ATP-dependent conversion of 5-aminoimidazole ribonucleotide (AIR) and HCO(3)(-) to N5-carboxyaminoimidazole ribonucleotide (N5-CAIR). This chain is N5-carboxyaminoimidazole ribonucleotide synthase, found in Vibrio parahaemolyticus serotype O3:K6 (strain RIMD 2210633).